Reading from the N-terminus, the 391-residue chain is Na(+)/H(+) antiporter NhaA 2 (391 aa).

The next 11 membrane-spanning stretches (helical) occupy residues 25-45, 56-76, 98-118, 128-148, 157-177, 180-200, 208-228, 264-284, 297-317, 335-355, and 364-384; these read AGGIVLMAAALAALIVANSPL, VWLGLSVELWINDGLMAIFFL, ALPGFAALGGMLVPALIYIAI, GWAIPAATDIAFALGVLSLLG, VFLAALAILDDLGAVTIIAFF, SGLNLPMLAAAFVTLAVLVAL, LLPYLLLGALLWFFVLQSGVH, VAFAVVPIFGFANAGVSLSGI, VALGLFVGKQIGVFLAAVLAI, GVAILCGIGFTMSLFIGNLAF, and EVKVGVLIGSGLAAVAGIVLL.

This sequence belongs to the NhaA Na(+)/H(+) (TC 2.A.33) antiporter family.

The protein resides in the cell inner membrane. It catalyses the reaction Na(+)(in) + 2 H(+)(out) = Na(+)(out) + 2 H(+)(in). Its function is as follows. Na(+)/H(+) antiporter that extrudes sodium in exchange for external protons. The polypeptide is Na(+)/H(+) antiporter NhaA 2 (Pseudomonas syringae pv. tomato (strain ATCC BAA-871 / DC3000)).